The primary structure comprises 572 residues: Proline--tRNA ligase (572 aa).

It belongs to the class-II aminoacyl-tRNA synthetase family. ProS type 1 subfamily. Homodimer.

The protein resides in the cytoplasm. It carries out the reaction tRNA(Pro) + L-proline + ATP = L-prolyl-tRNA(Pro) + AMP + diphosphate. Functionally, catalyzes the attachment of proline to tRNA(Pro) in a two-step reaction: proline is first activated by ATP to form Pro-AMP and then transferred to the acceptor end of tRNA(Pro). As ProRS can inadvertently accommodate and process non-cognate amino acids such as alanine and cysteine, to avoid such errors it has two additional distinct editing activities against alanine. One activity is designated as 'pretransfer' editing and involves the tRNA(Pro)-independent hydrolysis of activated Ala-AMP. The other activity is designated 'posttransfer' editing and involves deacylation of mischarged Ala-tRNA(Pro). The misacylated Cys-tRNA(Pro) is not edited by ProRS. This is Proline--tRNA ligase from Shigella dysenteriae serotype 1 (strain Sd197).